The sequence spans 201 residues: Small ribosomal subunit protein uS4 (201 aa).

The disordered stretch occupies residues 1–45 (MARYTGPLTKKSRRLGTDLVGNDKSFERRPYPPGVHGRGRTKDSE). The S4 RNA-binding domain occupies 91-157 (SRLDNVVYRA…PPIVIARETF (67 aa)).

It belongs to the universal ribosomal protein uS4 family. As to quaternary structure, part of the 30S ribosomal subunit. Contacts protein S5. The interaction surface between S4 and S5 is involved in control of translational fidelity.

One of the primary rRNA binding proteins, it binds directly to 16S rRNA where it nucleates assembly of the body of the 30S subunit. Functionally, with S5 and S12 plays an important role in translational accuracy. The chain is Small ribosomal subunit protein uS4 from Cutibacterium acnes (strain DSM 16379 / KPA171202) (Propionibacterium acnes).